The following is a 466-amino-acid chain: Histidine--tRNA ligase (466 aa).

The protein belongs to the class-II aminoacyl-tRNA synthetase family. As to quaternary structure, homodimer.

It localises to the cytoplasm. It carries out the reaction tRNA(His) + L-histidine + ATP = L-histidyl-tRNA(His) + AMP + diphosphate + H(+). The sequence is that of Histidine--tRNA ligase (hisS) from Bifidobacterium longum (strain NCC 2705).